The following is a 382-amino-acid chain: Deoxyuridine 5'-triphosphate nucleotidohydrolase (382 aa).

The segment covering 1–12 (MIKPNIPAPVRP) has biased composition (pro residues). Disordered stretches follow at residues 1–60 (MIKP…MMIS) and 97–118 (LLRD…RRPE). A compositionally biased stretch (basic and acidic residues) spans 100–118 (DGPEAPPREPTPKEARRPE).

Belongs to the dUTPase family. Mg(2+) serves as cofactor.

It carries out the reaction dUTP + H2O = dUMP + diphosphate + H(+). It participates in pyrimidine metabolism; dUMP biosynthesis; dUMP from dCTP (dUTP route): step 2/2. Its function is as follows. Involved in nucleotide metabolism: produces dUMP, the immediate precursor of thymidine nucleotides and decreases the intracellular concentration of dUTP to avoid uracil incorporation into viral DNA. This Murid herpesvirus 1 (strain Smith) (MuHV-1) protein is Deoxyuridine 5'-triphosphate nucleotidohydrolase.